Consider the following 360-residue polypeptide: MLLLLAEYLQQFYKGFAVFQYLTLRGILGVLTALSLALCLGPWMIRTLQNRQIGQSVRNDGPQSHLSKSGTPTMGGALILSAIGISTLLWADLRNHYVWVVLLVTLAFGAIGWVDDYRKVIEKNSRGLPSRWKYFWQSVFGLGAAIFLYMTAQSPVETTLLIPMLKDVSIPLGIGFVVLTYFVIVGSSNAVNLTDGLDGLAIMPTVMVGGALGIFCYLSGNVKFAEYLLIPYVPGAGELIVFCGALIGAGLGFLWFNTYPAQVFMGDVGALALGAALGTIAVIVRQEIVLFIMGGVFVMETLSVVIQVASFKLTGRRVFRMAPIHHHFELKGWPEPRVIVRFWIITVILVLIGLATLKLR.

Helical transmembrane passes span 25–45 (RGIL…PWMI), 73–93 (TMGG…WADL), 97–117 (YVWV…VDDY), 132–152 (WKYF…YMTA), 168–188 (VSIP…VGSS), 199–219 (GLAI…CYLS), 236–256 (AGEL…FLWF), 263–283 (VFMG…IAVI), 288–308 (IVLF…VIQV), and 338–358 (VIVR…ATLK).

It belongs to the glycosyltransferase 4 family. MraY subfamily. The cofactor is Mg(2+).

Its subcellular location is the cell inner membrane. The catalysed reaction is UDP-N-acetyl-alpha-D-muramoyl-L-alanyl-gamma-D-glutamyl-meso-2,6-diaminopimeloyl-D-alanyl-D-alanine + di-trans,octa-cis-undecaprenyl phosphate = di-trans,octa-cis-undecaprenyl diphospho-N-acetyl-alpha-D-muramoyl-L-alanyl-D-glutamyl-meso-2,6-diaminopimeloyl-D-alanyl-D-alanine + UMP. Its pathway is cell wall biogenesis; peptidoglycan biosynthesis. Catalyzes the initial step of the lipid cycle reactions in the biosynthesis of the cell wall peptidoglycan: transfers peptidoglycan precursor phospho-MurNAc-pentapeptide from UDP-MurNAc-pentapeptide onto the lipid carrier undecaprenyl phosphate, yielding undecaprenyl-pyrophosphoryl-MurNAc-pentapeptide, known as lipid I. The chain is Phospho-N-acetylmuramoyl-pentapeptide-transferase from Pseudomonas fluorescens (strain ATCC BAA-477 / NRRL B-23932 / Pf-5).